Reading from the N-terminus, the 470-residue chain is Protein escargot (470 aa).

Positions 271 to 309 are disordered; sequence LNLNTSQPGEQAAAKTGDMSPETMPNASAKKDKNQPPRY. C2H2-type zinc fingers lie at residues 309–331, 344–366, 370–392, and 398–420; these read YQCPDCQKSYSTFSGLTKHQQFH, FSCKDCDKTYVSLGALKMHIRTH, CKCNLCGKAFSRPWLLQGHIRTH, and FSCQHCHRAFADRSNLRAHLQTH. Residues 426-449 form a C2H2-type 5; atypical zinc finger; it reads YSCTSCSKTFSRMSLLTKHSEGGC. The segment at 448–470 is disordered; sequence GCPGGSAGSSSSSELNYAGYAEP.

This sequence belongs to the snail C2H2-type zinc-finger protein family. As to expression, expression is complex and dynamic. In early embryogenesis, expression begins on the dorsal side of the embryo. Expressed in a pattern of longitudinal stripes early in germband elongation. Later in embryogenesis, expression is in cells that correspond to the wing, haltere, leg and genital imaginal disks and the abdominal histoblasts. In the embryonic leg disk, expression is restricted to imaginal cells. Also expressed in the central nervous system (CNS), tracheae and head of stage 14 embryos. CNS and tracheal expression decays during later stages, though head expression persists until late in embryogenesis. In third instar larvae, expression is seen in the brain and in regions of many imaginal tissues including the eye-antennal, wing, leg and haltere disks. Expressed in embryonic, larval and adult male germline stem cells and in the somatic cells of the embryonic gonads.

The protein localises to the nucleus. In terms of biological role, transcription factor that can both stimulate and repress transcription. Binds to the consensus DNA sequence 5'-A/GCAGGTG-3'. Regulates cell motility and adhesion during tracheal morphogenesis by stimulating transcription of the DE-cadherin gene shg at branch tips, thereby promoting tracheal tube fusion. Maintains diploidy in imaginal cells by inhibiting the transcription of genes required for endoreplication. Required for development of the genital disk and acts as an intrinsic determinant of wing cell fate. The somatic protein is required for maintenance of male germ cells. Acts with other members of the snail protein family to control embryonic central nervous system development. In Drosophila melanogaster (Fruit fly), this protein is Protein escargot (esg).